We begin with the raw amino-acid sequence, 141 residues long: Large ribosomal subunit protein uL11 (141 aa).

The protein belongs to the universal ribosomal protein uL11 family. Part of the ribosomal stalk of the 50S ribosomal subunit. Interacts with L10 and the large rRNA to form the base of the stalk. L10 forms an elongated spine to which L12 dimers bind in a sequential fashion forming a multimeric L10(L12)X complex. One or more lysine residues are methylated.

Its function is as follows. Forms part of the ribosomal stalk which helps the ribosome interact with GTP-bound translation factors. The protein is Large ribosomal subunit protein uL11 of Streptococcus pyogenes serotype M1.